The following is a 285-amino-acid chain: Probable endonuclease 4 (285 aa).

His-69, His-109, Glu-145, Asp-179, His-182, His-216, Asp-229, His-231, and Glu-261 together coordinate Zn(2+).

Belongs to the AP endonuclease 2 family. The cofactor is Zn(2+).

The enzyme catalyses Endonucleolytic cleavage to 5'-phosphooligonucleotide end-products.. Its function is as follows. Endonuclease IV plays a role in DNA repair. It cleaves phosphodiester bonds at apurinic or apyrimidinic (AP) sites, generating a 3'-hydroxyl group and a 5'-terminal sugar phosphate. The sequence is that of Probable endonuclease 4 from Cronobacter sakazakii (strain ATCC BAA-894) (Enterobacter sakazakii).